We begin with the raw amino-acid sequence, 87 residues long: Small ribosomal subunit protein bS21 (87 aa).

A compositionally biased stretch (basic and acidic residues) spans 47–63; the sequence is YEKPSEKRARQKAEAVR. The tract at residues 47–87 is disordered; sequence YEKPSEKRARQKAEAVRRARKLARKRAQREGLLPMPKKPGR. Residues 64 to 73 are compositionally biased toward basic residues; that stretch reads RARKLARKRA.

It belongs to the bacterial ribosomal protein bS21 family.

This is Small ribosomal subunit protein bS21 from Caulobacter vibrioides (strain ATCC 19089 / CIP 103742 / CB 15) (Caulobacter crescentus).